Consider the following 197-residue polypeptide: Small ribosomal subunit protein uS4 (197 aa).

Positions 87–147 (LRLDNVLFRL…EKSKSSARYK (61 aa)) constitute an S4 RNA-binding domain.

The protein belongs to the universal ribosomal protein uS4 family. In terms of assembly, part of the 30S ribosomal subunit. Contacts protein S5. The interaction surface between S4 and S5 is involved in control of translational fidelity.

Functionally, one of the primary rRNA binding proteins, it binds directly to 16S rRNA where it nucleates assembly of the body of the 30S subunit. With S5 and S12 plays an important role in translational accuracy. This Lachnospira eligens (strain ATCC 27750 / DSM 3376 / VPI C15-48 / C15-B4) (Eubacterium eligens) protein is Small ribosomal subunit protein uS4.